The primary structure comprises 266 residues: Interleukin-1 beta (266 aa).

Residues 1–113 (MATVPEPTNE…ETYDDDLLCD (113 aa)) constitute a propeptide that is removed on maturation.

This sequence belongs to the IL-1 family. In terms of assembly, monomer. In its precursor form, weakly interacts with full-length MEFV; the mature cytokine does not interact at all. Interacts with integrins ITGAV:ITGBV and ITGA5:ITGB1; integrin-binding is required for IL1B signaling. Interacts with cargo receptor TMED10; the interaction is direct and is required for the secretion of IL1B mature form. Interacts with HSP90AB1; the interaction facilitates cargo translocation into the ERGIC. Interacts with HSP90B1; the interaction facilitates cargo translocation into the ERGIC.

The protein resides in the cytoplasm. It is found in the cytosol. The protein localises to the secreted. Its subcellular location is the lysosome. It localises to the extracellular exosome. Potent pro-inflammatory cytokine. Initially discovered as the major endogenous pyrogen, induces prostaglandin synthesis, neutrophil influx and activation, T-cell activation and cytokine production, B-cell activation and antibody production, and fibroblast proliferation and collagen production. Promotes Th17 differentiation of T-cells. Synergizes with IL12/interleukin-12 to induce IFNG synthesis from T-helper 1 (Th1) cells. Plays a role in angiogenesis by inducing VEGF production synergistically with TNF and IL6. Involved in transduction of inflammation downstream of pyroptosis: its mature form is specifically released in the extracellular milieu by passing through the gasdermin-D (GSDMD) pore. This is Interleukin-1 beta (IL1B) from Delphinapterus leucas (Beluga whale).